The chain runs to 343 residues: Phosphate acyltransferase (343 aa).

This sequence belongs to the PlsX family. In terms of assembly, homodimer. Probably interacts with PlsY.

Its subcellular location is the cytoplasm. The catalysed reaction is a fatty acyl-[ACP] + phosphate = an acyl phosphate + holo-[ACP]. It functions in the pathway lipid metabolism; phospholipid metabolism. Its function is as follows. Catalyzes the reversible formation of acyl-phosphate (acyl-PO(4)) from acyl-[acyl-carrier-protein] (acyl-ACP). This enzyme utilizes acyl-ACP as fatty acyl donor, but not acyl-CoA. This Neorickettsia sennetsu (strain ATCC VR-367 / Miyayama) (Ehrlichia sennetsu) protein is Phosphate acyltransferase.